Reading from the N-terminus, the 600-residue chain is Probable translation initiation factor IF-2 (600 aa).

The tr-type G domain maps to Leu-13 to Met-228. The interval Gly-22–Thr-29 is G1. Residue Gly-22–Thr-29 participates in GTP binding. A G2 region spans residues Ala-47 to His-51. Positions Asp-84–Gly-87 are G3. GTP contacts are provided by residues Asp-84 to His-88 and Asn-138 to Asp-141. Residues Asn-138–Asp-141 are G4. Residues Ile-140–Ser-162 form a disordered region. A G5 region spans residues Ser-206–Glu-208.

Belongs to the TRAFAC class translation factor GTPase superfamily. Classic translation factor GTPase family. IF-2 subfamily.

In terms of biological role, function in general translation initiation by promoting the binding of the formylmethionine-tRNA to ribosomes. Seems to function along with eIF-2. This is Probable translation initiation factor IF-2 from Halobacterium salinarum (strain ATCC 700922 / JCM 11081 / NRC-1) (Halobacterium halobium).